The sequence spans 398 residues: MKLIKNLMPLKSAEKIVFEKLSEYLDENKKVKEVDIVEALNRISAEDIKAPIDLPYFNKAAMDGYAVIAEDTFGASETNPIILNLADGDEITYGEAKKIFTGDKLPKNANAVVMKEFCNEVDDFVEVYKTVHPNENVSRIGEDVKKGDVVLKKGEIINPYHLNMLASLGIKKIKVYDLSFGIISTGDELINLDEIRDIEEDISKLDGKIINSNSYMLYGLVKNLGFNAKIYDIVKDDKEKLKKAIKTALSENDALLITGGTSVSERDITVETVRELGDVIVHGVNIRPGKPFGFGIINDKPVFMLSGYPVASAVQFELFIQRFFIERKKVTLPLKRNMASELGRVDFVRVKVDIEVEPIRITGSGVISSLIKSDGYILIPENVEGYEKGELVDVYLLK.

Belongs to the MoeA family.

It participates in cofactor biosynthesis; molybdopterin biosynthesis. In Methanocaldococcus jannaschii (strain ATCC 43067 / DSM 2661 / JAL-1 / JCM 10045 / NBRC 100440) (Methanococcus jannaschii), this protein is Putative molybdopterin biosynthesis protein MJ0666.